The primary structure comprises 402 residues: S-adenosylmethionine synthase (402 aa).

137 to 142 (GQGSAD) is a binding site for ATP.

The protein belongs to the AdoMet synthase 2 family. Mg(2+) is required as a cofactor.

It carries out the reaction L-methionine + ATP + H2O = S-adenosyl-L-methionine + phosphate + diphosphate. The protein operates within amino-acid biosynthesis; S-adenosyl-L-methionine biosynthesis; S-adenosyl-L-methionine from L-methionine: step 1/1. In terms of biological role, catalyzes the formation of S-adenosylmethionine from methionine and ATP. In Pyrobaculum aerophilum (strain ATCC 51768 / DSM 7523 / JCM 9630 / CIP 104966 / NBRC 100827 / IM2), this protein is S-adenosylmethionine synthase.